The primary structure comprises 860 residues: Leucine--tRNA ligase (860 aa).

The short motif at 42 to 52 (PYPSGRLHMGH) is the 'HIGH' region element. Positions 619–623 (KMSKS) match the 'KMSKS' region motif. K622 lines the ATP pocket.

This sequence belongs to the class-I aminoacyl-tRNA synthetase family.

It is found in the cytoplasm. It catalyses the reaction tRNA(Leu) + L-leucine + ATP = L-leucyl-tRNA(Leu) + AMP + diphosphate. This chain is Leucine--tRNA ligase, found in Proteus mirabilis (strain HI4320).